The primary structure comprises 195 residues: NADH-quinone oxidoreductase subunit B (195 aa).

[4Fe-4S] cluster-binding residues include Cys74, Cys75, Cys139, and Cys169.

The protein belongs to the complex I 20 kDa subunit family. As to quaternary structure, NDH-1 is composed of 14 different subunits. Subunits NuoB, C, D, E, F, and G constitute the peripheral sector of the complex. It depends on [4Fe-4S] cluster as a cofactor.

The protein localises to the cell inner membrane. The catalysed reaction is a quinone + NADH + 5 H(+)(in) = a quinol + NAD(+) + 4 H(+)(out). In terms of biological role, NDH-1 shuttles electrons from NADH, via FMN and iron-sulfur (Fe-S) centers, to quinones in the respiratory chain. The immediate electron acceptor for the enzyme in this species is believed to be ubiquinone. Couples the redox reaction to proton translocation (for every two electrons transferred, four hydrogen ions are translocated across the cytoplasmic membrane), and thus conserves the redox energy in a proton gradient. This Methylobacterium sp. (strain 4-46) protein is NADH-quinone oxidoreductase subunit B.